The chain runs to 375 residues: Alanine racemase (375 aa).

Lysine 41 serves as the catalytic Proton acceptor; specific for D-alanine. Lysine 41 bears the N6-(pyridoxal phosphate)lysine mark. Position 141 (arginine 141) interacts with substrate. Tyrosine 270 serves as the catalytic Proton acceptor; specific for L-alanine. Position 317 (methionine 317) interacts with substrate.

This sequence belongs to the alanine racemase family. Pyridoxal 5'-phosphate serves as cofactor.

The enzyme catalyses L-alanine = D-alanine. It functions in the pathway amino-acid biosynthesis; D-alanine biosynthesis; D-alanine from L-alanine: step 1/1. Its function is as follows. Catalyzes the interconversion of L-alanine and D-alanine. May also act on other amino acids. The chain is Alanine racemase (alr) from Lactiplantibacillus plantarum (strain ATCC BAA-793 / NCIMB 8826 / WCFS1) (Lactobacillus plantarum).